The following is a 160-amino-acid chain: MSDVENQPFFNIQRVYLKDMSLEQPNSPAIFLEQDMPSVEVEVDVKAERLAESVFEVVVSGTVTAKVKDKVAFLIEAKQAGIFDIRNIPDEQLDPLVGIACPTILFPYLRSNIADAITRAGFPPIHLAEINFQALYEQRLAQLQQQQAGAAGAPNGTALN.

It belongs to the SecB family. As to quaternary structure, homotetramer, a dimer of dimers. One homotetramer interacts with 1 SecA dimer.

Its subcellular location is the cytoplasm. Functionally, one of the proteins required for the normal export of preproteins out of the cell cytoplasm. It is a molecular chaperone that binds to a subset of precursor proteins, maintaining them in a translocation-competent state. It also specifically binds to its receptor SecA. This is Protein-export protein SecB from Burkholderia multivorans (strain ATCC 17616 / 249).